We begin with the raw amino-acid sequence, 347 residues long: S-adenosylmethionine:tRNA ribosyltransferase-isomerase (347 aa).

It belongs to the QueA family. In terms of assembly, monomer.

The protein resides in the cytoplasm. It carries out the reaction 7-aminomethyl-7-carbaguanosine(34) in tRNA + S-adenosyl-L-methionine = epoxyqueuosine(34) in tRNA + adenine + L-methionine + 2 H(+). The protein operates within tRNA modification; tRNA-queuosine biosynthesis. Transfers and isomerizes the ribose moiety from AdoMet to the 7-aminomethyl group of 7-deazaguanine (preQ1-tRNA) to give epoxyqueuosine (oQ-tRNA). This is S-adenosylmethionine:tRNA ribosyltransferase-isomerase from Erythrobacter litoralis (strain HTCC2594).